We begin with the raw amino-acid sequence, 337 residues long: DNA-directed RNA polymerase subunit alpha (337 aa).

Positions 1-233 (MVREEVVGST…DLFIPFLHAE (233 aa)) are alpha N-terminal domain (alpha-NTD). The segment at 265–337 (KEIALKCIFI…FAIDLPKNKF (73 aa)) is alpha C-terminal domain (alpha-CTD).

The protein belongs to the RNA polymerase alpha chain family. In terms of assembly, in plastids the minimal PEP RNA polymerase catalytic core is composed of four subunits: alpha, beta, beta', and beta''. When a (nuclear-encoded) sigma factor is associated with the core the holoenzyme is formed, which can initiate transcription.

The protein resides in the plastid. Its subcellular location is the chloroplast. The catalysed reaction is RNA(n) + a ribonucleoside 5'-triphosphate = RNA(n+1) + diphosphate. Its function is as follows. DNA-dependent RNA polymerase catalyzes the transcription of DNA into RNA using the four ribonucleoside triphosphates as substrates. This is DNA-directed RNA polymerase subunit alpha from Acorus calamus (Sweet flag).